Reading from the N-terminus, the 505-residue chain is Metalloprotease TIKI1 (505 aa).

Positions 1-19 (MSPWSWFLLQTLCLLPTGA) are cleaved as a signal peptide. The Extracellular segment spans residues 20–477 (ASRRGAPGTA…RRGHSHHSQM (458 aa)). Asn220, Asn229, Asn278, and Asn336 each carry an N-linked (GlcNAc...) asparagine glycan. Positions 389 to 428 (PEAVSSGHSTLPPLVSRPGSADTPSEAEQRFRKKRRRSQR) are disordered. Over residues 419 to 428 (FRKKRRRSQR) the composition is skewed to basic residues. The chain crosses the membrane as a helical span at residues 478–498 (VASSACLSLWTPVFWVLVLAF). The Cytoplasmic segment spans residues 499-505 (QTETPLL).

This sequence belongs to the TIKI family. Requires Mn(2+) as cofactor. Co(2+) serves as cofactor.

It is found in the cell membrane. Metalloprotease that acts as a negative regulator of the Wnt signaling pathway by mediating the cleavage of the 8 N-terminal residues of a subset of Wnt proteins. Following cleavage, Wnt proteins become oxidized and form large disulfide-bond oligomers, leading to their inactivation. Able to cleave WNT3A, WNT5, but not WNT11. Required for head formation. The chain is Metalloprotease TIKI1 (TRABD2A) from Homo sapiens (Human).